The following is an 868-amino-acid chain: Protein translocase subunit SecA (868 aa).

Residues Gln87, 105–109, and Asp500 each bind ATP; that span reads GEGKT. Residues Cys849, Cys851, Cys860, and His861 each contribute to the Zn(2+) site.

Belongs to the SecA family. As to quaternary structure, monomer and homodimer. Part of the essential Sec protein translocation apparatus which comprises SecA, SecYEG and auxiliary proteins SecDF-YajC and YidC. Requires Zn(2+) as cofactor.

The protein localises to the cell membrane. It is found in the cytoplasm. The catalysed reaction is ATP + H2O + cellular proteinSide 1 = ADP + phosphate + cellular proteinSide 2.. Part of the Sec protein translocase complex. Interacts with the SecYEG preprotein conducting channel. Has a central role in coupling the hydrolysis of ATP to the transfer of proteins into and across the cell membrane, serving both as a receptor for the preprotein-SecB complex and as an ATP-driven molecular motor driving the stepwise translocation of polypeptide chains across the membrane. The protein is Protein translocase subunit SecA of Wolbachia pipientis wMel.